The sequence spans 102 residues: MAESKMRIKLKGYDHAIVDQSIVKIIQAAEGTGAKVRGPIPLPTEKQVITILRAVHKYKDSREQFDMRTHKRLLEILNPTAATMDILKRVQLPSGVDIEIKL.

It belongs to the universal ribosomal protein uS10 family. As to quaternary structure, part of the 30S ribosomal subunit.

Involved in the binding of tRNA to the ribosomes. The polypeptide is Small ribosomal subunit protein uS10 (Mycoplasma mycoides subsp. mycoides SC (strain CCUG 32753 / NCTC 10114 / PG1)).